A 434-amino-acid chain; its full sequence is Chaperone SurA (434 aa).

A signal peptide spans 1 to 20 (MKNWRTLILGLVICANTAFA). PpiC domains follow at residues 171-272 (DTEL…KVND) and 282-382 (VTEV…QLVD).

It is found in the periplasm. It catalyses the reaction [protein]-peptidylproline (omega=180) = [protein]-peptidylproline (omega=0). Functionally, chaperone involved in the correct folding and assembly of outer membrane proteins. Recognizes specific patterns of aromatic residues and the orientation of their side chains, which are found more frequently in integral outer membrane proteins. May act in both early periplasmic and late outer membrane-associated steps of protein maturation. The polypeptide is Chaperone SurA (Yersinia pestis bv. Antiqua (strain Antiqua)).